Here is a 196-residue protein sequence, read N- to C-terminus: Pyridoxal 5'-phosphate synthase subunit PdxT (196 aa).

Residue 47-49 coordinates L-glutamine; sequence GES. Catalysis depends on cysteine 79, which acts as the Nucleophile. Residues arginine 106 and 134-135 contribute to the L-glutamine site; that span reads IR. Active-site charge relay system residues include histidine 170 and glutamate 172.

This sequence belongs to the glutaminase PdxT/SNO family. In terms of assembly, in the presence of PdxS, forms a dodecamer of heterodimers. Only shows activity in the heterodimer.

It catalyses the reaction aldehydo-D-ribose 5-phosphate + D-glyceraldehyde 3-phosphate + L-glutamine = pyridoxal 5'-phosphate + L-glutamate + phosphate + 3 H2O + H(+). It carries out the reaction L-glutamine + H2O = L-glutamate + NH4(+). It functions in the pathway cofactor biosynthesis; pyridoxal 5'-phosphate biosynthesis. In terms of biological role, catalyzes the hydrolysis of glutamine to glutamate and ammonia as part of the biosynthesis of pyridoxal 5'-phosphate. The resulting ammonia molecule is channeled to the active site of PdxS. The polypeptide is Pyridoxal 5'-phosphate synthase subunit PdxT (Bacillus pumilus (strain SAFR-032)).